The primary structure comprises 84 residues: Large ribosomal subunit protein bL31B (84 aa).

This sequence belongs to the bacterial ribosomal protein bL31 family. Type B subfamily. As to quaternary structure, part of the 50S ribosomal subunit.

Its function is as follows. Binds the 23S rRNA. The polypeptide is Large ribosomal subunit protein bL31B (Rhodococcus jostii (strain RHA1)).